The chain runs to 515 residues: 2-isopropylmalate synthase (515 aa).

A Pyruvate carboxyltransferase domain is found at 5 to 268 (VIIFDTTLRD…VCGIDATQIV (264 aa)). Mn(2+) is bound by residues Asp-14, His-202, His-204, and Asn-239. The tract at residues 394–515 (KFISLSQHSE…QAKLNAQMTP (122 aa)) is regulatory domain.

Belongs to the alpha-IPM synthase/homocitrate synthase family. LeuA type 1 subfamily. In terms of assembly, homodimer. Requires Mn(2+) as cofactor.

It localises to the cytoplasm. It carries out the reaction 3-methyl-2-oxobutanoate + acetyl-CoA + H2O = (2S)-2-isopropylmalate + CoA + H(+). It functions in the pathway amino-acid biosynthesis; L-leucine biosynthesis; L-leucine from 3-methyl-2-oxobutanoate: step 1/4. In terms of biological role, catalyzes the condensation of the acetyl group of acetyl-CoA with 3-methyl-2-oxobutanoate (2-ketoisovalerate) to form 3-carboxy-3-hydroxy-4-methylpentanoate (2-isopropylmalate). The polypeptide is 2-isopropylmalate synthase (Polynucleobacter necessarius subsp. necessarius (strain STIR1)).